Consider the following 527-residue polypeptide: Phospholipase A1-Igamma3, chloroplastic (527 aa).

The N-terminal 52 residues, 1 to 52 (MASLSLPITLKNPRFFSSSPQNIFKTQPQTLVLTTKFKTCSIICSSSCTSIS), are a transit peptide targeting the chloroplast. A compositionally biased stretch (low complexity) spans 55-65 (TTQQKQSNKQT). Residues 55–82 (TTQQKQSNKQTHVSDNKREEKAEEEEEE) form a disordered region. The span at 66-75 (HVSDNKREEK) shows a compositional bias: basic and acidic residues. A GXSXG motif is present at residues 300–304 (GHSLG). Ser-302 serves as the catalytic Acyl-ester intermediate. Residues Asp-366 and His-423 each act as charge relay system in the active site.

The protein belongs to the AB hydrolase superfamily. Lipase family. In terms of tissue distribution, highly expressed in flowers. Lower levels in seedlings, leaves and stems.

The protein localises to the plastid. It localises to the chloroplast. It carries out the reaction 1,2-dihexadecanoyl-sn-glycero-3-phosphocholine + H2O = 2-hexadecanoyl-sn-glycero-3-phosphocholine + hexadecanoate + H(+). The catalysed reaction is a 1,2-diacyl-3-O-(beta-D-galactosyl)-sn-glycerol + H2O = an acyl-3-O-(beta-D-galactosyl)-sn-glycerol + a fatty acid + H(+). It catalyses the reaction a 1,2-diacyl-3-O-[alpha-D-galactosyl-(1-&gt;6)-beta-D-galactosyl]-sn-glycerol + H2O = acyl-3-O-[alpha-D-galactosyl-(1-&gt;6)-beta-D-galactosyl]-sn-glycerol + a fatty acid + H(+). Its function is as follows. Acylhydrolase that catalyzes the hydrolysis of phosphatidylcholine at the sn-1 position. Moderate activity toward phosphatidylcholine (PC), monogalactosyldiacylglycerol (MGDG), digalactosyldiacylglycerol (DGDG) and triacylglycerol (TAG). This Arabidopsis thaliana (Mouse-ear cress) protein is Phospholipase A1-Igamma3, chloroplastic.